The chain runs to 387 residues: Alkanesulfonate monooxygenase (387 aa).

The segment at 365-387 (HNSGPFGETVGNDYRPSRLASQS) is disordered.

Belongs to the SsuD family.

It carries out the reaction an alkanesulfonate + FMNH2 + O2 = an aldehyde + FMN + sulfite + H2O + 2 H(+). Catalyzes the desulfonation of aliphatic sulfonates. In Bradyrhizobium diazoefficiens (strain JCM 10833 / BCRC 13528 / IAM 13628 / NBRC 14792 / USDA 110), this protein is Alkanesulfonate monooxygenase.